Here is a 331-residue protein sequence, read N- to C-terminus: Vitamin B12 import system permease protein BtuC (331 aa).

Transmembrane regions (helical) follow at residues 20 to 42 (LLIGLFLSVCVLYLLVGELWLSP), 62 to 84 (LLAAAVIGASLAVAGATLQVLLG), 91 to 113 (GVVGVSGGASVAMVILLLFFPSL), 117 to 136 (VAFMAAAVLGALLFTLLLVV), 148 to 170 (LLLVGVALGILSGAVVTWAFYFS), 190 to 209 (SWYQHLLSLVAVPVVIWLVL), 240 to 262 (LAIALLVGASVALGGVIGFVGLV), 277 to 299 (LLLPLSALCGALLLVSADLIARL), and 306 to 325 (LPLGVVTTTLGAPIFIWMLV).

It belongs to the binding-protein-dependent transport system permease family. FecCD subfamily. The complex is composed of two ATP-binding proteins (BtuD), two transmembrane proteins (BtuC) and a solute-binding protein (BtuF).

The protein resides in the cell inner membrane. In terms of biological role, part of the ABC transporter complex BtuCDF involved in vitamin B12 import. Involved in the translocation of the substrate across the membrane. The sequence is that of Vitamin B12 import system permease protein BtuC from Vibrio cholerae serotype O1 (strain ATCC 39315 / El Tor Inaba N16961).